We begin with the raw amino-acid sequence, 438 residues long: Sphingomyelinase phosphodiesterase D (438 aa).

Residues 1-17 (MKIILILVLVLVVSINA) form the signal peptide. Zn(2+) contacts are provided by aspartate 27 and histidine 29. The N-linked (GlcNAc...) asparagine glycan is linked to asparagine 40. Zn(2+) contacts are provided by aspartate 111 and asparagine 148. An N-linked (GlcNAc...) asparagine glycan is attached at asparagine 160. Histidine 247 contributes to the Zn(2+) binding site. N-linked (GlcNAc...) asparagine glycosylation occurs at asparagine 271. Zn(2+) contacts are provided by histidine 287 and histidine 289. 2 N-linked (GlcNAc...) asparagine glycosylation sites follow: asparagine 338 and asparagine 359.

It belongs to the acid sphingomyelinase family. Zn(2+) is required as a cofactor.

It localises to the secreted. This chain is Sphingomyelinase phosphodiesterase D (sgmD), found in Dictyostelium discoideum (Social amoeba).